The following is a 346-amino-acid chain: Holliday junction branch migration complex subunit RuvB (346 aa).

Residues 1-181 (MSDRNPLIDA…FGIPVRLNFY (181 aa)) form a large ATPase domain (RuvB-L) region. Residues leucine 20, arginine 21, glycine 62, lysine 65, threonine 66, threonine 67, 128–130 (EDF), arginine 171, tyrosine 181, and arginine 218 each bind ATP. Threonine 66 is a binding site for Mg(2+). The interval 182–252 (TVEELEYIVR…IADEALSRLE (71 aa)) is small ATPAse domain (RuvB-S). The tract at residues 255 to 346 (NRGLDQLDRR…SQYGLFMEDE (92 aa)) is head domain (RuvB-H). DNA-binding residues include arginine 291, arginine 310, and arginine 315.

It belongs to the RuvB family. As to quaternary structure, homohexamer. Forms an RuvA(8)-RuvB(12)-Holliday junction (HJ) complex. HJ DNA is sandwiched between 2 RuvA tetramers; dsDNA enters through RuvA and exits via RuvB. An RuvB hexamer assembles on each DNA strand where it exits the tetramer. Each RuvB hexamer is contacted by two RuvA subunits (via domain III) on 2 adjacent RuvB subunits; this complex drives branch migration. In the full resolvosome a probable DNA-RuvA(4)-RuvB(12)-RuvC(2) complex forms which resolves the HJ.

It localises to the cytoplasm. It carries out the reaction ATP + H2O = ADP + phosphate + H(+). In terms of biological role, the RuvA-RuvB-RuvC complex processes Holliday junction (HJ) DNA during genetic recombination and DNA repair, while the RuvA-RuvB complex plays an important role in the rescue of blocked DNA replication forks via replication fork reversal (RFR). RuvA specifically binds to HJ cruciform DNA, conferring on it an open structure. The RuvB hexamer acts as an ATP-dependent pump, pulling dsDNA into and through the RuvAB complex. RuvB forms 2 homohexamers on either side of HJ DNA bound by 1 or 2 RuvA tetramers; 4 subunits per hexamer contact DNA at a time. Coordinated motions by a converter formed by DNA-disengaged RuvB subunits stimulates ATP hydrolysis and nucleotide exchange. Immobilization of the converter enables RuvB to convert the ATP-contained energy into a lever motion, pulling 2 nucleotides of DNA out of the RuvA tetramer per ATP hydrolyzed, thus driving DNA branch migration. The RuvB motors rotate together with the DNA substrate, which together with the progressing nucleotide cycle form the mechanistic basis for DNA recombination by continuous HJ branch migration. Branch migration allows RuvC to scan DNA until it finds its consensus sequence, where it cleaves and resolves cruciform DNA. The sequence is that of Holliday junction branch migration complex subunit RuvB from Brucella melitensis biotype 2 (strain ATCC 23457).